A 458-amino-acid chain; its full sequence is Probable plasmid replicative DNA helicase (458 aa).

In terms of domain architecture, SF4 helicase spans 194-458 (KIDYVDGLPT…GKFTIQKEAW (265 aa)). Residue 225 to 232 (ARPAMGKT) participates in ATP binding.

Belongs to the helicase family. DnaB subfamily. As to quaternary structure, homohexamer.

The enzyme catalyses Couples ATP hydrolysis with the unwinding of duplex DNA at the replication fork by translocating in the 5'-3' direction. This creates two antiparallel DNA single strands (ssDNA). The leading ssDNA polymer is the template for DNA polymerase III holoenzyme which synthesizes a continuous strand.. The catalysed reaction is ATP + H2O = ADP + phosphate + H(+). Functionally, a replicative DNA helicase, it participates in initiation and elongation during DNA replication. Travels ahead of the DNA replisome, separating dsDNA into templates for DNA synthesis. A processive ATP-dependent 5'-3' DNA helicase it has DNA-dependent ATPase activity. This chain is Probable plasmid replicative DNA helicase, found in Chlamydia psittaci (Chlamydophila psittaci).